A 216-amino-acid polypeptide reads, in one-letter code: Squamosa promoter-binding-like protein 13 (216 aa).

Residues 32–110 are disordered; sequence GDGGAALPSP…PSGGGGGPRC (79 aa). The segment covering 67–91 has biased composition (low complexity); sequence SSSAAVAAGASSSSSSSSVAAAARR. Positions 94 to 108 are enriched in gly residues; sequence GRAGGGAPSGGGGGP. An SBP-type zinc finger spans residues 107-184; sequence GPRCQVERCG…AGHNERRRKS (78 aa). Cys110, Cys115, Cys132, His135, Cys151, Cys154, His158, and Cys170 together coordinate Zn(2+). The Bipartite nuclear localization signal signature appears at 167-183; that stretch reads KRSCRRRLAGHNERRRK. Positions 175–216 are disordered; sequence AGHNERRRKSAADTAHGENCRHADQDAGRSHQGTGNPPFQIR. Over residues 189-203 the composition is skewed to basic and acidic residues; it reads AHGENCRHADQDAGR. The segment covering 205 to 216 has biased composition (polar residues); it reads HQGTGNPPFQIR.

As to expression, ubiquitous.

Its subcellular location is the nucleus. In terms of biological role, trans-acting factor that binds specifically to the consensus nucleotide sequence 5'-TNCGTACAA-3'. May be involved in panicle development. The polypeptide is Squamosa promoter-binding-like protein 13 (SPL13) (Oryza sativa subsp. japonica (Rice)).